A 536-amino-acid chain; its full sequence is Phosphoenolpyruvate carboxykinase (ATP) (536 aa).

The substrate site is built by R61, Y195, and K201. Residues K201, H220, and 236-244 each bind ATP; that span reads GLSGTGKTT. Mn(2+)-binding residues include K201 and H220. Position 257 (D257) interacts with Mn(2+). ATP is bound by residues E285, R323, and T448. R323 contacts substrate.

The protein belongs to the phosphoenolpyruvate carboxykinase (ATP) family. Requires Mn(2+) as cofactor.

The protein resides in the cytoplasm. The enzyme catalyses oxaloacetate + ATP = phosphoenolpyruvate + ADP + CO2. The protein operates within carbohydrate biosynthesis; gluconeogenesis. Functionally, involved in the gluconeogenesis. Catalyzes the conversion of oxaloacetate (OAA) to phosphoenolpyruvate (PEP) through direct phosphoryl transfer between the nucleoside triphosphate and OAA. This chain is Phosphoenolpyruvate carboxykinase (ATP), found in Methylobacterium sp. (strain 4-46).